A 730-amino-acid chain; its full sequence is MSDRFELYLTCPKGLEGLLAEEANQLGLTEVREHTSAIRGSADMETAYRLCLWSRLANRVLLVLKRFSMKNADDLYDGVHAVDWAEHLEADGTLAVEFSGHGSGIDNTHFGALKVKDAIVDKLRSREGLRPSVDKLDPDLRVHLRLDRGEAILSLDLSGHSLHQRGYRLQQGAAPLKENLAAAVLIRAGWPRIAAEGGALADPMCGVGTFLVEAAMIAADIAPNLKRERWGFSAWLGHVPALWRKLHDEAQARAQAGLAKPPLWIRGYEADPRLIQPGRNNVERAGLGDWVKIYQGEVASFEPRPDQNQKGLVISNPPYGERLGDEASLLYLYQNLGERLRQACMGWEAAVFTGAPELGKRMGIRSHKQYAFWNGALPCKLLLFKVQPDQFVTGERRQAAVEEGEPRRQAPVASEPARLSEGAQMFANRLQKNFKQLGKWARREQVDCYRVYDADMPEYALAVDLYQDWVHVQEYAAPRSVDPDKAQVRLLDALAAIPQALGIDPQRVVLKRRERQSGTRQYERQATEGRFQEVTEGGVKLLVNLTDYLDTGLFLDHRPMRMRIQREAVGKRFLNLFCYTATATVHAAKGGARSTTSVDLSKTYLDWARRNLSLNGFSERNRLEQSDVMAWLQNNQESFDLIFIDPPTFSNSKRMEGVFDVQRDHVELLDLAMARLAPGGVLYFSNNFRKFQLDEHLSTRYAVEEISAQTLDPDFARNNRIHRAWQLRLR.

The THUMP domain occupies 46-157 (TAYRLCLWSR…RGEAILSLDL (112 aa)). Residues 399 to 408 (AAVEEGEPRR) show a composition bias toward basic and acidic residues. The tract at residues 399 to 418 (AAVEEGEPRRQAPVASEPAR) is disordered.

Belongs to the methyltransferase superfamily. RlmKL family.

The protein localises to the cytoplasm. It catalyses the reaction guanosine(2445) in 23S rRNA + S-adenosyl-L-methionine = N(2)-methylguanosine(2445) in 23S rRNA + S-adenosyl-L-homocysteine + H(+). It carries out the reaction guanosine(2069) in 23S rRNA + S-adenosyl-L-methionine = N(2)-methylguanosine(2069) in 23S rRNA + S-adenosyl-L-homocysteine + H(+). In terms of biological role, specifically methylates the guanine in position 2445 (m2G2445) and the guanine in position 2069 (m7G2069) of 23S rRNA. In Pseudomonas entomophila (strain L48), this protein is Ribosomal RNA large subunit methyltransferase K/L.